We begin with the raw amino-acid sequence, 321 residues long: Anthranilate phosphoribosyltransferase (321 aa).

5-phospho-alpha-D-ribose 1-diphosphate contacts are provided by residues G72, 75 to 76 (GD), T80, 82 to 85 (NVST), 99 to 107 (KHGNVSITS), and S111. G72 is a binding site for anthranilate. S84 provides a ligand contact to Mg(2+). N102 lines the anthranilate pocket. Residue R157 coordinates anthranilate. Residues D216 and E217 each contribute to the Mg(2+) site.

It belongs to the anthranilate phosphoribosyltransferase family. Homodimer. Mg(2+) serves as cofactor.

It catalyses the reaction N-(5-phospho-beta-D-ribosyl)anthranilate + diphosphate = 5-phospho-alpha-D-ribose 1-diphosphate + anthranilate. The protein operates within amino-acid biosynthesis; L-tryptophan biosynthesis; L-tryptophan from chorismate: step 2/5. In terms of biological role, catalyzes the transfer of the phosphoribosyl group of 5-phosphorylribose-1-pyrophosphate (PRPP) to anthranilate to yield N-(5'-phosphoribosyl)-anthranilate (PRA). In Methanococcus maripaludis (strain DSM 14266 / JCM 13030 / NBRC 101832 / S2 / LL), this protein is Anthranilate phosphoribosyltransferase.